Here is a 600-residue protein sequence, read N- to C-terminus: Oligopeptide-binding protein OppA (600 aa).

The N-terminal stretch at Met-1–Ala-22 is a signal peptide. A lipid anchor (N-palmitoyl cysteine) is attached at Cys-23. Cys-23 carries the S-diacylglycerol cysteine lipid modification.

This sequence belongs to the bacterial solute-binding protein 5 family. In terms of assembly, the complex is composed of two ATP-binding proteins (OppD and OppF), two transmembrane proteins (OppB and OppC) and a solute-binding protein (OppA).

The protein localises to the cell membrane. Part of the ABC transporter complex OppABCDF involved in the uptake of oligopeptides. This is Oligopeptide-binding protein OppA from Lactococcus lactis subsp. cremoris (strain SK11).